A 139-amino-acid chain; its full sequence is Large ribosomal subunit protein uL13 (139 aa).

Belongs to the universal ribosomal protein uL13 family. In terms of assembly, part of the 50S ribosomal subunit.

Functionally, this protein is one of the early assembly proteins of the 50S ribosomal subunit, although it is not seen to bind rRNA by itself. It is important during the early stages of 50S assembly. The chain is Large ribosomal subunit protein uL13 from Nitratiruptor sp. (strain SB155-2).